A 301-amino-acid chain; its full sequence is Probable alpha-L-glutamate ligase 1 (301 aa).

In terms of domain architecture, ATP-grasp spans 104–287 (LQLLSRKGIG…VTEPIVEYIE (184 aa)). ATP-binding positions include K141, 178 to 179 (EY), D187, and 211 to 213 (RSN). Positions 248, 260, and 262 each coordinate Mg(2+). Mn(2+)-binding residues include D248, E260, and N262.

It belongs to the RimK family. Requires Mg(2+) as cofactor. It depends on Mn(2+) as a cofactor.

This Shewanella baltica (strain OS155 / ATCC BAA-1091) protein is Probable alpha-L-glutamate ligase 1.